The following is a 304-amino-acid chain: D-tagatose-1-phosphate kinase (304 aa).

Aspartate 250 functions as the Proton acceptor in the catalytic mechanism.

Belongs to the carbohydrate kinase PfkB family. Requires Mg(2+) as cofactor.

It carries out the reaction alpha-D-tagatopyranose 1-phosphate + ATP = D-tagatofuranose 1,6-bisphosphate + ADP + H(+). Its pathway is carbohydrate degradation. Activity is inhibited by tagatose-6-phosphate and fructose-6-phosphate. Its function is as follows. Kinase involved in a D-tagatose catabolic pathway. Catalyzes the phosphorylation of D-tagatose-1-phosphate (Tag-1P) to D-tagatose-1,6-bisphosphate. Can also use D-fructose-1-phosphate, with 40-fold lower catalytic efficiency, but not tagatose-6-phosphate or fructose-6-phosphate. The substrate, which occurs in a pyranose form in solution, may undergo a change to the furanose conformation after binding to the enzyme, in order to permit phosphorylation at C-6. This chain is D-tagatose-1-phosphate kinase, found in Bacillus licheniformis (strain ATCC 14580 / DSM 13 / JCM 2505 / CCUG 7422 / NBRC 12200 / NCIMB 9375 / NCTC 10341 / NRRL NRS-1264 / Gibson 46).